The following is a 58-amino-acid chain: Large ribosomal subunit protein bL32c (58 aa).

Positions 1–19 (MAVPKKRKSKMKTRLRKAQ) are enriched in basic residues. The disordered stretch occupies residues 1 to 25 (MAVPKKRKSKMKTRLRKAQWKSEAS).

Belongs to the bacterial ribosomal protein bL32 family.

The protein localises to the plastid. It is found in the chloroplast. The protein is Large ribosomal subunit protein bL32c (rpl32) of Chlorella vulgaris (Green alga).